A 423-amino-acid polypeptide reads, in one-letter code: MDIDQYMTDLGRRARQASRAMARASTAAKNAALAAVAQGIERDAALLKEANARDVARAREKGHDAAFIDRLTLSDKALKTMVEGLRQVAALADPIGEISNLKYRPSGIQVGQMRVPLGVIGIIYESRPNVTIDAAALCLKSGNATILRGGSEALECNAALAKLIGEGLEKAGLPQEAVQVVATSDRAAVGKLITMTEYVDVIVPRGGKSLIERLMNEARVPMIKHLDGICHVYVDDRADLAKALTVCDNAKTHRYGTCNTMETLLVARGIAAEVLPPLGKLYRDKQVELRVDAAARAVLADAGVGPLVDATEEDWRTEYLAPVLAIKVVENLDAAIDHINTYSSQHTDAIVTEDHDRAMRFLREVDSASVMVNASTRFADGFEFGLGAEIGISNDKLHARGPVGLEGLTSLKYVVLGHGEGRQ.

This sequence belongs to the gamma-glutamyl phosphate reductase family.

The protein localises to the cytoplasm. The enzyme catalyses L-glutamate 5-semialdehyde + phosphate + NADP(+) = L-glutamyl 5-phosphate + NADPH + H(+). Its pathway is amino-acid biosynthesis; L-proline biosynthesis; L-glutamate 5-semialdehyde from L-glutamate: step 2/2. Catalyzes the NADPH-dependent reduction of L-glutamate 5-phosphate into L-glutamate 5-semialdehyde and phosphate. The product spontaneously undergoes cyclization to form 1-pyrroline-5-carboxylate. In Paraburkholderia phytofirmans (strain DSM 17436 / LMG 22146 / PsJN) (Burkholderia phytofirmans), this protein is Gamma-glutamyl phosphate reductase.